The chain runs to 323 residues: MPQIVVAALYKFVSLPDYQELQPGLLALCNAQGIKGTLLLAEEGINGTVAGSRAAIDALLTYLRQDSRMVDIDHKESFADEMPFYRMKVRLKKEIVTLGVPGISPNKKVGTYVKPEDWNTLISDPDVVVIDTRNNYEYEIGTFKGAIDPATTTFRQFPEFVRKNLDPAKNKKVAMFCTGGIRCEKASSYMLEQGFKEVYHLQGGILKYLETIPEEESLWEGECFVFDQRVAVKHGLQVGDYDQCFACRHPISAADMASSKYVKGISCPRCYDRMSAEKRARIAERQRQIEIARQRGEEHIGDNARQYSLIHKLSKTKKILPKT.

The Rhodanese domain occupies 123–217; sequence SDPDVVVIDT…YLETIPEEES (95 aa). Cys-177 (cysteine persulfide intermediate) is an active-site residue.

The protein belongs to the TrhO family.

It catalyses the reaction uridine(34) in tRNA + AH2 + O2 = 5-hydroxyuridine(34) in tRNA + A + H2O. Functionally, catalyzes oxygen-dependent 5-hydroxyuridine (ho5U) modification at position 34 in tRNAs. This Methylobacillus flagellatus (strain ATCC 51484 / DSM 6875 / VKM B-1610 / KT) protein is tRNA uridine(34) hydroxylase.